A 765-amino-acid chain; its full sequence is Endothelin-converting enzyme 2 (765 aa).

The Cytoplasmic portion of the chain corresponds to 1–60 (MSVALQELGGGGNMVEYKRATLRDEDAPETPVEGGASPDAVEAGFRKRTSRLLGLHTQLE). A helical; Signal-anchor for type II membrane protein membrane pass occupies residues 61-81 (LVLAGVSLLLAALLLGCLVAL). Residues 82–765 (GVQYHRDPSH…MNSGQLCEVW (684 aa)) are Lumenal-facing. The region spanning 93–765 (TCLTEACIRV…MNSGQLCEVW (673 aa)) is the Peptidase M13 domain. 5 disulfides stabilise this stretch: C94-C99, C117-C750, C125-C710, C181-C430, and C639-C762. Residues N161, N165, N206, N266, N311, N378, and N534 are each glycosylated (N-linked (GlcNAc...) asparagine). Position 602 (H602) interacts with Zn(2+). Residue E603 is part of the active site. H606 lines the Zn(2+) pocket. N-linked (GlcNAc...) asparagine glycosylation is found at N627 and N635. E662 is a binding site for Zn(2+). The Proton donor role is filled by D666.

It belongs to the peptidase M13 family. It depends on Zn(2+) as a cofactor. Isoform ECE2-1 and isoform ECE2-2 are expressed in brain and adrenal gland.

The protein resides in the golgi apparatus membrane. It localises to the cytoplasmic vesicle. It is found in the secretory vesicle membrane. The enzyme catalyses Hydrolysis of the 21-Trp-|-Val-22 bond in big endothelin to form endothelin 1.. Converts big endothelin-1 to endothelin-1. Also involved in the processing of various neuroendocrine peptides, including neurotensin, angiotensin I, substance P, proenkephalin-derived peptides, and prodynorphin-derived peptides. May play a role in amyloid-beta processing. This chain is Endothelin-converting enzyme 2, found in Bos taurus (Bovine).